Here is a 221-residue protein sequence, read N- to C-terminus: ATP phosphoribosyltransferase (221 aa).

The protein belongs to the ATP phosphoribosyltransferase family. Short subfamily. As to quaternary structure, heteromultimer composed of HisG and HisZ subunits.

The protein resides in the cytoplasm. The enzyme catalyses 1-(5-phospho-beta-D-ribosyl)-ATP + diphosphate = 5-phospho-alpha-D-ribose 1-diphosphate + ATP. It participates in amino-acid biosynthesis; L-histidine biosynthesis; L-histidine from 5-phospho-alpha-D-ribose 1-diphosphate: step 1/9. Catalyzes the condensation of ATP and 5-phosphoribose 1-diphosphate to form N'-(5'-phosphoribosyl)-ATP (PR-ATP). Has a crucial role in the pathway because the rate of histidine biosynthesis seems to be controlled primarily by regulation of HisG enzymatic activity. In Anaeromyxobacter sp. (strain K), this protein is ATP phosphoribosyltransferase.